Here is a 371-residue protein sequence, read N- to C-terminus: GDP-perosamine synthase (371 aa).

At lysine 186 the chain carries N6-(pyridoxal phosphate)lysine.

It belongs to the DegT/DnrJ/EryC1 family. As to quaternary structure, homodimer. It depends on pyridoxal 5'-phosphate as a cofactor.

It carries out the reaction GDP-alpha-D-perosamine + 2-oxoglutarate = GDP-4-dehydro-alpha-D-rhamnose + L-glutamate. It functions in the pathway bacterial outer membrane biogenesis; LPS O-antigen biosynthesis. Its function is as follows. Catalyzes the synthesis of GDP-perosamine from GDP-4-keto-6-deoxy-D-mannose and L-glutamate. Can use only L-glutamate as amino donor. In vitro, can also use GDP-4-keto-3,6-dideoxymannose to produce GDP-3-deoxyperosamine. Involved in the formation of S-LPS, which is required for attachment of the protein S-layer to the outer membrane surface. The protein is GDP-perosamine synthase of Caulobacter vibrioides (strain ATCC 19089 / CIP 103742 / CB 15) (Caulobacter crescentus).